The sequence spans 77 residues: Protein ImpC (77 aa).

Belongs to the DinI family.

This is Protein ImpC (impC) from Salmonella typhimurium.